Here is a 271-residue protein sequence, read N- to C-terminus: Formamidopyrimidine-DNA glycosylase (271 aa).

Proline 2 acts as the Schiff-base intermediate with DNA in catalysis. The Proton donor role is filled by glutamate 3. Catalysis depends on lysine 58, which acts as the Proton donor; for beta-elimination activity. Residues histidine 92, arginine 111, and lysine 152 each contribute to the DNA site. The FPG-type zinc finger occupies 237-271 (YVYGKVQKPCKICNNIITLIRQNGRSTYFCNACQN). Arginine 261 (proton donor; for delta-elimination activity) is an active-site residue.

It belongs to the FPG family. Monomer. It depends on Zn(2+) as a cofactor.

The catalysed reaction is Hydrolysis of DNA containing ring-opened 7-methylguanine residues, releasing 2,6-diamino-4-hydroxy-5-(N-methyl)formamidopyrimidine.. It carries out the reaction 2'-deoxyribonucleotide-(2'-deoxyribose 5'-phosphate)-2'-deoxyribonucleotide-DNA = a 3'-end 2'-deoxyribonucleotide-(2,3-dehydro-2,3-deoxyribose 5'-phosphate)-DNA + a 5'-end 5'-phospho-2'-deoxyribonucleoside-DNA + H(+). In terms of biological role, involved in base excision repair of DNA damaged by oxidation or by mutagenic agents. Acts as a DNA glycosylase that recognizes and removes damaged bases. Has a preference for oxidized purines, such as 7,8-dihydro-8-oxoguanine (8-oxoG). Has AP (apurinic/apyrimidinic) lyase activity and introduces nicks in the DNA strand. Cleaves the DNA backbone by beta-delta elimination to generate a single-strand break at the site of the removed base with both 3'- and 5'-phosphates. The chain is Formamidopyrimidine-DNA glycosylase from Wolbachia sp. subsp. Drosophila simulans (strain wRi).